Reading from the N-terminus, the 463-residue chain is GTPase Der (463 aa).

EngA-type G domains are found at residues 3 to 166 and 177 to 350; these read PVVA…PESG and IRIA…QSAM. Residues 9-16, 56-60, 118-121, 183-190, 230-234, and 295-298 each bind GTP; these read GRTNVGKS, DTGGI, NKID, GRPNVGKS, DTAGI, and NKWD. Residues 351–435 form the KH-like domain; it reads LDLSASRLTQ…PLKLVFKSAE (85 aa).

This sequence belongs to the TRAFAC class TrmE-Era-EngA-EngB-Septin-like GTPase superfamily. EngA (Der) GTPase family. As to quaternary structure, associates with the 50S ribosomal subunit.

Its function is as follows. GTPase that plays an essential role in the late steps of ribosome biogenesis. The sequence is that of GTPase Der from Methylococcus capsulatus (strain ATCC 33009 / NCIMB 11132 / Bath).